The following is a 309-amino-acid chain: THO complex subunit Tho3 (309 aa).

WD repeat units follow at residues G22–T61, G65–E107, E109–T148, A192–S231, R234–K273, and P275–L309.

Belongs to the THOC3 family. In terms of assembly, component of the transcription/export (TREX) complex, which is at least is formed of SUB2, TEX1 and YRA1 and the THO complex composed of HPR1, MFT1, THO2 and THP1.

It is found in the nucleus. In terms of biological role, component of the TREX complex, which operates in coupling transcription elongation to mRNA export. The polypeptide is THO complex subunit Tho3 (THO3) (Schizosaccharomyces pombe (strain 972 / ATCC 24843) (Fission yeast)).